Reading from the N-terminus, the 1707-residue chain is Histone-lysine N-methyltransferase SETD1A (1707 aa).

The interaction with WDR82 stretch occupies residues 60–89 (LQDPRCHVRSKNRDFSLPVPKFKLDEFYIG). The 89-residue stretch at 84–172 (DEFYIGQIPL…NIIHAQLDIK (89 aa)) folds into the RRM domain. 7 disordered regions span residues 194 to 308 (PTGG…YQDA), 331 to 363 (TAATASSSASSSSLSSSSSSSSSSSSSQFRSSD), 381 to 486 (SYPP…AQHS), 506 to 655 (LASD…PPPH), 834 to 854 (AKPFQNAAKQQAKEEDKEKTK), 891 to 1251 (PSFK…GTEV), and 1264 to 1293 (ARRGLPALPAVEDSEATETSDEAERPRPLL). Residues 239–277 (NGTPCSQDTSFSSSRQDTPSSFGQFTPQSSQGTPYTSRG) show a composition bias toward polar residues. Composition is skewed to low complexity over residues 278-295 (STPYSQDSAYSSSTTSTS) and 331-357 (TAATASSSASSSSLSSSSSSSSSSSSS). Residues 430-440 (SEAPPPEPPEP) are compositionally biased toward pro residues. 2 positions are modified to phosphoserine: Ser-459 and Ser-464. The span at 459-473 (SPRPASPARSGSPAP) shows a compositional bias: low complexity. The segment covering 474-486 (ETTNESVPFAQHS) has biased composition (polar residues). 2 positions are modified to phosphoserine: Ser-508 and Ser-565. Residues 568–578 (ANGQNQASPCS) show a composition bias toward polar residues. Pro residues-rich tracts occupy residues 593–617 (SPPPAPTPPQQPPPPPPPPPPPPPY) and 624–655 (GYPPHQPAYLLPPRPDGPPPPEYPPPPPPPPH). Residues 844–854 (QAKEEDKEKTK) are compositionally biased toward basic and acidic residues. Ser-915 is modified (phosphoserine). 2 stretches are compositionally biased toward acidic residues: residues 918 to 927 (AEEDEDDPEQ) and 976 to 992 (KDEEDDEEDEEDEDREE). Basic and acidic residues predominate over residues 993–1002 (AVDTTKKETE). Over residues 1003 to 1012 (VSDGEDEESD) the composition is skewed to acidic residues. Residues 1032–1060 (DSESSSSSSSSSSSSSSSSSSSSSSSSES) are compositionally biased toward low complexity. Residues 1077–1094 (ASPPPREVPVPTPAPVEV) show a composition bias toward pro residues. Residue Ser-1103 is modified to Phosphoserine. A compositionally biased stretch (pro residues) spans 1127–1145 (PSAPLRPPEPPAGPPAPAP). Residues 1275–1284 (EDSEATETSD) show a composition bias toward acidic residues. The short motif at 1299–1303 (EHNYA) is the HCFC1-binding motif (HBM) element. 2 disordered regions span residues 1307-1417 (KPTP…AYEP) and 1472-1499 (NLTTPKRKRRPQDGPREHQTGSARSEGY). A compositionally biased stretch (pro residues) spans 1308-1323 (PTPPAPALRPPEPVPA). Positions 1360-1377 (EGEEEGEEEGEEEEEESS) are enriched in acidic residues. Positions 1390–1403 (RRRSLRSHARRRRP) are enriched in basic residues. Residues 1404–1414 (PPPPPPPPPRA) show a composition bias toward pro residues. The interval 1415 to 1450 (YEPRSEFEQMTILYDIWNSGLDSEDMSYLRLTYERL) is interaction with CFP1. An interaction with ASH2L, RBBP5 and WDR5 region spans residues 1450 to 1537 (LLQQTSGADW…GTNRVLSERR (88 aa)). The WDR5 interaction motif (WIN) motif lies at 1492–1497 (GSARSE). The short motif at 1537 to 1542 (RSEQRR) is the RxxxRR motif element. The 118-residue stretch at 1568 to 1685 (KKLRFGRSRI…VDEEITYDYK (118 aa)) folds into the SET domain. S-adenosyl-L-methionine is bound at residue Tyr-1684. In terms of domain architecture, Post-SET spans 1691–1707 (NKIPCLCGTESCRGSLN).

This sequence belongs to the class V-like SAM-binding methyltransferase superfamily. In terms of assembly, component of the SET1A/COMPASS complex composed of the catalytic subunit SETD1A, WDR5, WDR82, RBBP5, ASH2L/ASH2, CXXC1/CFP1, HCFC1 and DPY30 homotrimer. Forms a core complex with the evolutionary conserved subcomplex WRAD composed of WDR5, RBBP5, ASH2L/ASH2 and DPY30 subunits; WRAD differentially stimulates the methyltransferase activity. Interacts with BOD1L1 (via COMPASS-Shg1 domain) at replication forks. Interacts with HCFC1. Interacts with ASH2/ASH2L. Interacts with CXXC1/CFP1. Interacts with RBBP5. Interacts (via N-terminal region) with WDR82; the interaction is direct. Interacts (via the RRM domain) with hyperphosphorylated C-terminal domain (CTD) of RNA polymerase II large subunit (POLR2A) only in the presence of WDR82. Binds specifically to CTD heptad repeats phosphorylated on 'Ser-5' of each heptad. Interacts with ZNF335. Interacts with SUPT6H. Interacts with NAP1L1. Interacts (via WIN motif) with WDR5.

Its subcellular location is the nucleus speckle. It localises to the chromosome. It is found in the cytoplasm. It catalyses the reaction L-lysyl(4)-[histone H3] + S-adenosyl-L-methionine = N(6)-methyl-L-lysyl(4)-[histone H3] + S-adenosyl-L-homocysteine + H(+). The enzyme catalyses N(6)-methyl-L-lysyl(4)-[histone H3] + S-adenosyl-L-methionine = N(6),N(6)-dimethyl-L-lysyl(4)-[histone H3] + S-adenosyl-L-homocysteine + H(+). The catalysed reaction is N(6),N(6)-dimethyl-L-lysyl(4)-[histone H3] + S-adenosyl-L-methionine = N(6),N(6),N(6)-trimethyl-L-lysyl(4)-[histone H3] + S-adenosyl-L-homocysteine + H(+). Functionally, histone methyltransferase that catalyzes methyl group transfer from S-adenosyl-L-methionine to the epsilon-amino group of 'Lys-4' of histone H3 (H3K4) via a non-processive mechanism. Part of chromatin remodeling machinery, forms H3K4me1, H3K4me2 and H3K4me3 methylation marks at active chromatin sites where transcription and DNA repair take place. Responsible for H3K4me3 enriched promoters and transcriptional programming of inner mass stem cells and neuron progenitors during embryogenesis. Required for H3K4me1 mark at stalled replication forks. Mediates FANCD2-dependent nucleosome remodeling and RAD51 nucleofilaments stabilization at reversed forks, protecting them from nucleolytic degradation. Does not methylate 'Lys-4' of histone H3 if the neighboring 'Lys-9' residue is already methylated. Binds RNAs involved in RNA processing and the DNA damage response. This is Histone-lysine N-methyltransferase SETD1A (SETD1A) from Homo sapiens (Human).